The following is a 481-amino-acid chain: Cysteine--tRNA ligase (481 aa).

Cys29 serves as a coordination point for Zn(2+). The short motif at 31-41 (VTVYDYCHIGH) is the 'HIGH' region element. Positions 209, 234, and 238 each coordinate Zn(2+). The 'KMSKS' region motif lies at 266 to 270 (KMSKS). Residue Lys269 coordinates ATP.

The protein belongs to the class-I aminoacyl-tRNA synthetase family. In terms of assembly, monomer. Zn(2+) serves as cofactor.

The protein localises to the cytoplasm. The catalysed reaction is tRNA(Cys) + L-cysteine + ATP = L-cysteinyl-tRNA(Cys) + AMP + diphosphate. The polypeptide is Cysteine--tRNA ligase (Syntrophotalea carbinolica (strain DSM 2380 / NBRC 103641 / GraBd1) (Pelobacter carbinolicus)).